A 312-amino-acid chain; its full sequence is Cobalamin biosynthesis protein CobD (312 aa).

Helical transmembrane passes span 61-81 (IALLLAPFTLAAWALARLPLL), 83-103 (IIVPVALLYLAVGARSLAQHA), 152-172 (DAVFAALFWFLVLGAPGAVLY), and 292-312 (GMWLWAALSLAAAILIGAIHA).

Belongs to the CobD/CbiB family.

The protein resides in the cell membrane. Its pathway is cofactor biosynthesis; adenosylcobalamin biosynthesis. Functionally, converts cobyric acid to cobinamide by the addition of aminopropanol on the F carboxylic group. In Chromobacterium violaceum (strain ATCC 12472 / DSM 30191 / JCM 1249 / CCUG 213 / NBRC 12614 / NCIMB 9131 / NCTC 9757 / MK), this protein is Cobalamin biosynthesis protein CobD.